We begin with the raw amino-acid sequence, 371 residues long: Pyruvate dehydrogenase E1 component subunit alpha (371 aa).

In terms of assembly, heterodimer of an alpha and a beta chain. Thiamine diphosphate is required as a cofactor.

The catalysed reaction is N(6)-[(R)-lipoyl]-L-lysyl-[protein] + pyruvate + H(+) = N(6)-[(R)-S(8)-acetyldihydrolipoyl]-L-lysyl-[protein] + CO2. Functionally, the pyruvate dehydrogenase complex catalyzes the overall conversion of pyruvate to acetyl-CoA and CO(2). It contains multiple copies of three enzymatic components: pyruvate dehydrogenase (E1), dihydrolipoamide acetyltransferase (E2) and lipoamide dehydrogenase (E3). The sequence is that of Pyruvate dehydrogenase E1 component subunit alpha from Bacillus cereus.